The following is a 464-amino-acid chain: Aspartyl protease 37 (464 aa).

The first 19 residues, 1–19, serve as a signal peptide directing secretion; it reads MNAAVLLLLLALAALPASC. Residue Asn-41 is glycosylated (N-linked (GlcNAc...) asparagine). A Peptidase A1 domain is found at 89–456; sequence YLVKLGIGTP…NLRRGRVTFV (368 aa). The active site involves Asp-107. Cys-117 and Cys-123 are joined by a disulfide. Residues Asn-174 and Asn-261 are each glycosylated (N-linked (GlcNAc...) asparagine). Low complexity predominate over residues 299 to 311; sequence TTTTTATATATAP. Residues 299 to 319 are disordered; that stretch reads TTTTTATATATAPAPAPTPSP. Asn-320 carries N-linked (GlcNAc...) asparagine glycosylation. Residue Asp-337 is part of the active site. A disulfide bridge links Cys-376 with Cys-420.

The protein belongs to the peptidase A1 family.

In terms of biological role, anther-specific aspartic protease involved in tapetal programmed cell death (PCD). Directly regulated by the transcription factor EAT1/DTD in anthers during tapetum PCD and degeneration. The protein is Aspartyl protease 37 of Oryza sativa subsp. japonica (Rice).